The chain runs to 197 residues: Peptidyl-tRNA hydrolase (197 aa).

Tyrosine 18 contributes to the tRNA binding site. Histidine 23 (proton acceptor) is an active-site residue. Positions 69, 71, and 117 each coordinate tRNA.

Belongs to the PTH family. In terms of assembly, monomer.

The protein resides in the cytoplasm. The catalysed reaction is an N-acyl-L-alpha-aminoacyl-tRNA + H2O = an N-acyl-L-amino acid + a tRNA + H(+). Functionally, hydrolyzes ribosome-free peptidyl-tRNAs (with 1 or more amino acids incorporated), which drop off the ribosome during protein synthesis, or as a result of ribosome stalling. In terms of biological role, catalyzes the release of premature peptidyl moieties from peptidyl-tRNA molecules trapped in stalled 50S ribosomal subunits, and thus maintains levels of free tRNAs and 50S ribosomes. The chain is Peptidyl-tRNA hydrolase from Tolumonas auensis (strain DSM 9187 / NBRC 110442 / TA 4).